Reading from the N-terminus, the 131-residue chain is Hypocretin neuropeptide precursor (131 aa).

A Pyrrolidone carboxylic acid modification is found at glutamine 34. Intrachain disulfides connect cysteine 39–cysteine 45 and cysteine 40–cysteine 47. Position 66 is a leucine amide (leucine 66). The tract at residues 104–131 (EPALRPCSGRRCPSEAASSVAPGGRSGV) is disordered.

This sequence belongs to the orexin family.

It is found in the rough endoplasmic reticulum. Its subcellular location is the cytoplasmic vesicle. The protein resides in the synapse. Its function is as follows. Neuropeptides that play a significant role in the regulation of food intake and sleep-wakefulness, possibly by coordinating the complex behavioral and physiologic responses of these complementary homeostatic functions. A broader role in the homeostatic regulation of energy metabolism, autonomic function, hormonal balance and the regulation of body fluids, is also suggested. Binds to orexin receptors HCRTR1/OX1R and HCRTR2/OX2R with a high affinity. Stimulates food intake. Modulates pituitary luteinizing hormone secretion in an ovarian steroid-dependent manner. Functionally, binds to orexin receptor HCRTR2/OX2R only. Stimulates food intake. Modulates pituitary luteinizing hormone secretion in an ovarian steroid-dependent manner. This chain is Hypocretin neuropeptide precursor (HCRT), found in Bos taurus (Bovine).